The following is a 125-amino-acid chain: Large ribosomal subunit protein eL32 (125 aa).

The protein belongs to the eukaryotic ribosomal protein eL32 family.

In Sulfolobus acidocaldarius (strain ATCC 33909 / DSM 639 / JCM 8929 / NBRC 15157 / NCIMB 11770), this protein is Large ribosomal subunit protein eL32 (rpl32e).